A 138-amino-acid chain; its full sequence is Transcription antitermination protein NusB (138 aa).

This sequence belongs to the NusB family.

Functionally, involved in transcription antitermination. Required for transcription of ribosomal RNA (rRNA) genes. Binds specifically to the boxA antiterminator sequence of the ribosomal RNA (rrn) operons. The protein is Transcription antitermination protein NusB of Coxiella burnetii (strain CbuK_Q154) (Coxiella burnetii (strain Q154)).